The sequence spans 34 residues: DDIT3 upstream open reading frame protein (34 aa).

In terms of assembly, interacts with DDIT3 (isoform 1).

It localises to the nucleus. The protein resides in the cytoplasm. Its function is as follows. Product of the upstream open reading frame (uORF) of DDIT3/CHOP that is specifically produced in absence of stress, thereby preventing translation of downstream stress effector DDIT3/CHOP. The sequence is that of DDIT3 upstream open reading frame protein from Mus musculus (Mouse).